The chain runs to 45 residues: Protein PsbN (45 aa).

Residues Phe-12–Gly-30 traverse the membrane as a helical segment.

Belongs to the PsbN family.

It is found in the plastid. The protein localises to the chloroplast thylakoid membrane. In terms of biological role, may play a role in photosystem I and II biogenesis. In Adiantum capillus-veneris (Maidenhair fern), this protein is Protein PsbN.